The following is a 777-amino-acid chain: Gliding motility regulatory protein (777 aa).

The HPt domain occupies M1–A108. H49 carries the post-translational modification Phosphohistidine; by autocatalysis. Disordered regions lie at residues T129–P149 and P164–V212. 2 stretches are compositionally biased toward pro residues: residues V139–P149 and P164–Q177. Positions A178 to A197 are enriched in low complexity. One can recognise a Histidine kinase domain in the interval D270–L509. One can recognise a CheW-like domain in the interval L511–R645. In terms of domain architecture, Response regulatory spans R660–L776. D709 is subject to 4-aspartylphosphate.

The enzyme catalyses ATP + protein L-histidine = ADP + protein N-phospho-L-histidine.. In terms of biological role, frzE is involved in a sensory transduction pathway that controls the frequency at which cells reverse their gliding direction. FrzE seems to be capable of autophosphorylating itself on a histidine residue and then to transfer that group to an aspartate residue in the C-terminal part of the protein. The protein is Gliding motility regulatory protein (frzE) of Myxococcus xanthus.